The sequence spans 217 residues: Probable transaldolase (217 aa).

The Schiff-base intermediate with substrate role is filled by Lys-83.

Belongs to the transaldolase family. Type 3B subfamily.

Its subcellular location is the cytoplasm. It carries out the reaction D-sedoheptulose 7-phosphate + D-glyceraldehyde 3-phosphate = D-erythrose 4-phosphate + beta-D-fructose 6-phosphate. The protein operates within carbohydrate degradation; pentose phosphate pathway; D-glyceraldehyde 3-phosphate and beta-D-fructose 6-phosphate from D-ribose 5-phosphate and D-xylulose 5-phosphate (non-oxidative stage): step 2/3. Transaldolase is important for the balance of metabolites in the pentose-phosphate pathway. The sequence is that of Probable transaldolase from Lactiplantibacillus plantarum (strain ATCC BAA-793 / NCIMB 8826 / WCFS1) (Lactobacillus plantarum).